A 157-amino-acid chain; its full sequence is Peptide methionine sulfoxide reductase MsrA (157 aa).

C10 is an active-site residue.

The protein belongs to the MsrA Met sulfoxide reductase family.

It catalyses the reaction L-methionyl-[protein] + [thioredoxin]-disulfide + H2O = L-methionyl-(S)-S-oxide-[protein] + [thioredoxin]-dithiol. The catalysed reaction is [thioredoxin]-disulfide + L-methionine + H2O = L-methionine (S)-S-oxide + [thioredoxin]-dithiol. Its function is as follows. Has an important function as a repair enzyme for proteins that have been inactivated by oxidation. Catalyzes the reversible oxidation-reduction of methionine sulfoxide in proteins to methionine. The sequence is that of Peptide methionine sulfoxide reductase MsrA from Clostridium botulinum (strain Okra / Type B1).